Reading from the N-terminus, the 20-residue chain is Ranalexin-1Cb (20 aa).

An intrachain disulfide couples Cys14 to Cys20.

Expressed by the skin glands.

It is found in the secreted. Its function is as follows. Antibacterial activity against Gram-positive bacterium S.aureus and Gram-negative bacterium E.coli. Has activity against C.albicans. The protein is Ranalexin-1Cb of Lithobates clamitans (Green frog).